The chain runs to 67 residues: Cold shock-like protein CspE (67 aa).

One can recognise a CSD domain in the interval 5 to 64; it reads GKVKWFNSEKGFGFIEVEGGNDVFVHFSAITGDGFKSLDEGQEVSFEVEDGNRGPQAKNV.

Homodimer.

Its subcellular location is the cytoplasm. Its function is as follows. Can bind to ATTGG and CCAAT motifs (Y-box motifs) of single-stranded oligonucleotides. In Bacillus anthracis, this protein is Cold shock-like protein CspE (cspE).